Reading from the N-terminus, the 817-residue chain is Lon protease (817 aa).

The region spanning 22 to 216 (VPIMPLSDGV…KVTRQLNHQL (195 aa)) is the Lon N-terminal domain. 368–375 (GPPGTGKT) serves as a coordination point for ATP. One can recognise a Lon proteolytic domain in the interval 604 to 785 (ALTPGVVMGL…GDVLELALNG (182 aa)). Residues S691 and K734 contribute to the active site. A disordered region spans residues 784–817 (NGNGATKKKKKTPAKSKKSTKPAAKKTAARKSRK). A compositionally biased stretch (basic residues) spans 789 to 817 (TKKKKKTPAKSKKSTKPAAKKTAARKSRK).

Belongs to the peptidase S16 family. In terms of assembly, homohexamer. Organized in a ring with a central cavity.

The protein resides in the cytoplasm. The catalysed reaction is Hydrolysis of proteins in presence of ATP.. Functionally, ATP-dependent serine protease that mediates the selective degradation of mutant and abnormal proteins as well as certain short-lived regulatory proteins. Required for cellular homeostasis and for survival from DNA damage and developmental changes induced by stress. Degrades polypeptides processively to yield small peptide fragments that are 5 to 10 amino acids long. Binds to DNA in a double-stranded, site-specific manner. This chain is Lon protease, found in Desulfosudis oleivorans (strain DSM 6200 / JCM 39069 / Hxd3) (Desulfococcus oleovorans).